Consider the following 393-residue polypeptide: Demethylspheroidene O-methyltransferase (393 aa).

The segment at 1 to 36 (MPKDDHTGATADRTAQPTGTGKQPLVPGQPGAAPVQ) is disordered. Residues 26 to 36 (VPGQPGAAPVQ) are compositionally biased toward low complexity. S-adenosyl-L-methionine is bound by residues aspartate 259 and arginine 297.

Belongs to the class I-like SAM-binding methyltransferase superfamily. Cation-independent O-methyltransferase family.

It catalyses the reaction demethylspheroidene + S-adenosyl-L-methionine = spheroidene + S-adenosyl-L-homocysteine + H(+). It functions in the pathway carotenoid biosynthesis; spheroidene biosynthesis. Its function is as follows. Methyltransferase that mediates the O-methylation of 1-hydroxy carotenoids. Converts hydroxyneurosporene to methoxyneurosporene or demethylspheroidene to spheroidene. Also able to produce spirilloxanthin. The protein is Demethylspheroidene O-methyltransferase (crtF) of Rhodobacter capsulatus (strain ATCC BAA-309 / NBRC 16581 / SB1003).